The primary structure comprises 230 residues: Cytidylate kinase (230 aa).

12–20 contributes to the ATP binding site; sequence GPSGAGKGT.

This sequence belongs to the cytidylate kinase family. Type 1 subfamily.

It is found in the cytoplasm. It catalyses the reaction CMP + ATP = CDP + ADP. The enzyme catalyses dCMP + ATP = dCDP + ADP. The chain is Cytidylate kinase from Shewanella sp. (strain W3-18-1).